A 213-amino-acid polypeptide reads, in one-letter code: Protein PAE0745 (213 aa).

The region spanning 8–201 (EEGTFLVRLA…EKSPGGEVYE (194 aa)) is the AMMECR1 domain.

This Pyrobaculum aerophilum (strain ATCC 51768 / DSM 7523 / JCM 9630 / CIP 104966 / NBRC 100827 / IM2) protein is Protein PAE0745.